The chain runs to 361 residues: Peptide chain release factor 1 (361 aa).

Q237 is modified (N5-methylglutamine). A compositionally biased stretch (basic and acidic residues) spans 287-297 (KQQKEQSDTRK). The interval 287–313 (KQQKEQSDTRKSLVGSGDRSERIRTYN) is disordered.

The protein belongs to the prokaryotic/mitochondrial release factor family. Post-translationally, methylated by PrmC. Methylation increases the termination efficiency of RF1.

Its subcellular location is the cytoplasm. Its function is as follows. Peptide chain release factor 1 directs the termination of translation in response to the peptide chain termination codons UAG and UAA. The polypeptide is Peptide chain release factor 1 (Francisella tularensis subsp. tularensis (strain FSC 198)).